We begin with the raw amino-acid sequence, 264 residues long: 3-methyl-2-oxobutanoate hydroxymethyltransferase (264 aa).

Residues aspartate 45 and aspartate 84 each contribute to the Mg(2+) site. Residues 45–46, aspartate 84, and lysine 112 each bind 3-methyl-2-oxobutanoate; that span reads DS. Glutamate 114 contacts Mg(2+). Catalysis depends on glutamate 181, which acts as the Proton acceptor.

It belongs to the PanB family. As to quaternary structure, homodecamer; pentamer of dimers. Mg(2+) serves as cofactor.

The protein localises to the cytoplasm. The enzyme catalyses 3-methyl-2-oxobutanoate + (6R)-5,10-methylene-5,6,7,8-tetrahydrofolate + H2O = 2-dehydropantoate + (6S)-5,6,7,8-tetrahydrofolate. It functions in the pathway cofactor biosynthesis; (R)-pantothenate biosynthesis; (R)-pantoate from 3-methyl-2-oxobutanoate: step 1/2. Functionally, catalyzes the reversible reaction in which hydroxymethyl group from 5,10-methylenetetrahydrofolate is transferred onto alpha-ketoisovalerate to form ketopantoate. In Tolumonas auensis (strain DSM 9187 / NBRC 110442 / TA 4), this protein is 3-methyl-2-oxobutanoate hydroxymethyltransferase.